The chain runs to 1392 residues: Condensin complex subunit 1 (1392 aa).

The segment at 1 to 593 (MSPHNFEFHL…TGSKDSPSVP (593 aa)) is interaction with SMC2 and SMC4. Phosphoserine is present on residues serine 20 and serine 575. Disordered regions lie at residues 569-602 (EAST…QSND), 945-966 (REEQ…ETTM), and 1293-1392 (FETG…RHRS). The span at 945 to 960 (REEQEHRAKEPKEKTA) shows a compositional bias: basic and acidic residues. Serine 1300, serine 1305, serine 1320, and serine 1323 each carry phosphoserine. Threonine 1329 bears the Phosphothreonine mark. Residues 1332-1353 (PRRTKPGRPQTQQRKKSQRKAK) carry the Bipartite nuclear localization signal motif. Residues 1344–1353 (QRKKSQRKAK) are compositionally biased toward basic residues. Serine 1358, serine 1361, serine 1362, and serine 1367 each carry phosphoserine. Residues 1360–1373 (ESSEDELSAEMTEE) are compositionally biased toward acidic residues. Phosphothreonine; by CDK1 is present on residues threonine 1375 and threonine 1380. Position 1386 is a phosphoserine (serine 1386).

This sequence belongs to the CND1 (condensin subunit 1) family. As to quaternary structure, component of the condensin complex, which contains the SMC2 and SMC4 heterodimer, and three non SMC subunits that probably regulate the complex: NCAPH/BRRN1, NCAPD2/CAPD2 and NCAPG. Interacts with histones H1 and H3. Phosphorylated by CDK1. Its phosphorylation, as well as that of NCAPH and NCAPG subunits, activates the condensin complex and is required for chromosome condensation.

Its subcellular location is the nucleus. It localises to the cytoplasm. It is found in the chromosome. Its function is as follows. Regulatory subunit of the condensin complex, a complex required for conversion of interphase chromatin into mitotic-like condense chromosomes. The condensin complex probably introduces positive supercoils into relaxed DNA in the presence of type I topoisomerases and converts nicked DNA into positive knotted forms in the presence of type II topoisomerases. May target the condensin complex to DNA via its C-terminal domain. May promote the resolution of double-strand DNA catenanes (intertwines) between sister chromatids. Condensin-mediated compaction likely increases tension in catenated sister chromatids, providing directionality for type II topoisomerase-mediated strand exchanges toward chromatid decatenation. Required for decatenation of non-centromeric ultrafine DNA bridges during anaphase. Early in neurogenesis, may play an essential role to ensure accurate mitotic chromosome condensation in neuron stem cells, ultimately affecting neuron pool and cortex size. In Mus musculus (Mouse), this protein is Condensin complex subunit 1 (Ncapd2).